We begin with the raw amino-acid sequence, 280 residues long: MPELPEVETIKETLKLFVCNKTIKHIDIEWPNMIKHPDDVEEFKALVTGQTIRSMGRKGKFLLFYLDEYVLISHLRMEGKYSVHSPGDPVKKHTHVTFYFSNGEELRYNDVRKFGTMHVYPIGEEFMHKPLNQLGPDPFDTSFNLEYFYEKLKRTDRYIKTALLDQSIVTGLGNIYVDETLFRANVHPLKRCSKLSKQEVKKLQINAKETLRDAIKAGGTTIRSYVNTQGDMGMFQQDLYVYGQHSKPCRVCGADIIKIKVGGRGTHLCPTCQPNKQGVR.

Pro-2 serves as the catalytic Schiff-base intermediate with DNA. The active-site Proton donor is Glu-3. Lys-60 serves as the catalytic Proton donor; for beta-elimination activity. DNA-binding residues include His-93 and Arg-112. The segment at 240–274 adopts an FPG-type zinc-finger fold; that stretch reads YVYGQHSKPCRVCGADIIKIKVGGRGTHLCPTCQP. Arg-264 acts as the Proton donor; for delta-elimination activity in catalysis.

This sequence belongs to the FPG family. In terms of assembly, monomer. Requires Zn(2+) as cofactor.

It catalyses the reaction Hydrolysis of DNA containing ring-opened 7-methylguanine residues, releasing 2,6-diamino-4-hydroxy-5-(N-methyl)formamidopyrimidine.. The catalysed reaction is 2'-deoxyribonucleotide-(2'-deoxyribose 5'-phosphate)-2'-deoxyribonucleotide-DNA = a 3'-end 2'-deoxyribonucleotide-(2,3-dehydro-2,3-deoxyribose 5'-phosphate)-DNA + a 5'-end 5'-phospho-2'-deoxyribonucleoside-DNA + H(+). Involved in base excision repair of DNA damaged by oxidation or by mutagenic agents. Acts as a DNA glycosylase that recognizes and removes damaged bases. Has a preference for oxidized purines, such as 7,8-dihydro-8-oxoguanine (8-oxoG). Has AP (apurinic/apyrimidinic) lyase activity and introduces nicks in the DNA strand. Cleaves the DNA backbone by beta-delta elimination to generate a single-strand break at the site of the removed base with both 3'- and 5'-phosphates. This is Formamidopyrimidine-DNA glycosylase from Oceanobacillus iheyensis (strain DSM 14371 / CIP 107618 / JCM 11309 / KCTC 3954 / HTE831).